Reading from the N-terminus, the 355-residue chain is Natterin-1 (355 aa).

An N-terminal signal peptide occupies residues 1–18; the sequence is MIPSVLLVTLLLLSWTSA. Residues 19 to 27 constitute a propeptide that is removed on maturation; sequence EKDLKVRVA.

This sequence belongs to the natterin family. In terms of processing, contains 4 disulfide bonds. Expressed by the venom gland.

The protein localises to the secreted. With respect to regulation, inhibited by tissue-kallikrein inhibitor TKI and trasylol. Plasma kallikrein inhibitor PKSI527 and classical inhibitors of serine-, metallo-, thiol- or aspartate-peptidases evokes a minor inhibition of the peptide digestion. Its function is as follows. Shows nociceptive, edema-inducing and kininogenase activity with release of kallidin from low molecular weight kininogen. The cleavage occurs at Met-Lys bonds. The polypeptide is Natterin-1 (Thalassophryne nattereri (Copper Joe toadfish)).